The chain runs to 61 residues: uncharacterized protein (61 aa).

This is an uncharacterized protein from Haemophilus influenzae (strain ATCC 51907 / DSM 11121 / KW20 / Rd).